The following is a 1164-amino-acid chain: DNA-directed RNA polymerase subunit beta' (1164 aa).

Zn(2+) is bound by residues Cys60, Cys62, Cys75, and Cys78. Asp449, Asp451, and Asp453 together coordinate Mg(2+). Zn(2+) is bound by residues Cys776, Cys850, Cys857, and Cys860.

This sequence belongs to the RNA polymerase beta' chain family. As to quaternary structure, the RNAP catalytic core consists of 2 alpha, 1 beta, 1 beta' and 1 omega subunit. When a sigma factor is associated with the core the holoenzyme is formed, which can initiate transcription. Mg(2+) is required as a cofactor. Requires Zn(2+) as cofactor.

It catalyses the reaction RNA(n) + a ribonucleoside 5'-triphosphate = RNA(n+1) + diphosphate. DNA-dependent RNA polymerase catalyzes the transcription of DNA into RNA using the four ribonucleoside triphosphates as substrates. The protein is DNA-directed RNA polymerase subunit beta' of Moorella thermoacetica (strain ATCC 39073 / JCM 9320).